The chain runs to 189 residues: UPF0312 protein VC0395_0473/VC395_A0785 (189 aa).

The first 22 residues, 1–22 (MKKTLMAVGLAAVISIPFAANA), serve as a signal peptide directing secretion.

This sequence belongs to the UPF0312 family. Type 1 subfamily.

The protein localises to the periplasm. The chain is UPF0312 protein VC0395_0473/VC395_A0785 from Vibrio cholerae serotype O1 (strain ATCC 39541 / Classical Ogawa 395 / O395).